A 426-amino-acid chain; its full sequence is MDKGRCTILNSEELWAQARQLFAGGVNSPVRAAVKPFPFYVERGKGAYIYTVEGNKFIDYVLGYGPLILGHSPESVKRKIIEQLEKGWLFGTPSKLEIELAKKISSHIPSAQKIRFVNSGTEATMAAIRLARGYSKRSKILKFSGNYHGAHDYTLVEAGSAATEYNVTTSDGIPMEIMKTIEICEFNDLDCVDKKLRNEDIAAALLEPIMGNAGVILPEKGFLSGLRELTKSYNSLLIFDEVITGFRIDIGGAQSYYQIYPDITTLGKIIGGGFPIGAVAGKAEIIDNFTPAGRVFNAGTFNANPISMIAGIATIEELEKEYPYNIANKASKTLVEELERLLKIKHTINHIGSMFQVFFGIDKVRNYSDAKRANKEYYIKFHERLLKERVFIPPSQYETIFTSAAHEDDVVNDTIDKLAKVIGELS.

Residue K268 is modified to N6-(pyridoxal phosphate)lysine.

This sequence belongs to the class-III pyridoxal-phosphate-dependent aminotransferase family. HemL subfamily. Pyridoxal 5'-phosphate serves as cofactor.

Its subcellular location is the cytoplasm. The catalysed reaction is (S)-4-amino-5-oxopentanoate = 5-aminolevulinate. Its pathway is porphyrin-containing compound metabolism; protoporphyrin-IX biosynthesis; 5-aminolevulinate from L-glutamyl-tRNA(Glu): step 2/2. In Saccharolobus islandicus (strain M.16.27) (Sulfolobus islandicus), this protein is Glutamate-1-semialdehyde 2,1-aminomutase.